A 318-amino-acid chain; its full sequence is Probable 3-hydroxyisobutyrate dehydrogenase-like 3, mitochondrial (318 aa).

NAD(+) is bound by residues Thr-35–Ala-64 and Ser-129. Residue Lys-203 is part of the active site. An NAD(+)-binding site is contributed by Lys-271.

The protein belongs to the HIBADH-related family. 3-hydroxyisobutyrate dehydrogenase subfamily.

The protein localises to the mitochondrion. The enzyme catalyses 3-hydroxy-2-methylpropanoate + NAD(+) = 2-methyl-3-oxopropanoate + NADH + H(+). The protein operates within amino-acid degradation; L-valine degradation. The protein is Probable 3-hydroxyisobutyrate dehydrogenase-like 3, mitochondrial of Arabidopsis thaliana (Mouse-ear cress).